Here is a 260-residue protein sequence, read N- to C-terminus: Snake venom serine protease KN5 (260 aa).

An N-terminal signal peptide occupies residues 1–18 (MVLIRVLANLLILQLSYA). Positions 19–24 (QKSSEL) are excised as a propeptide. The Peptidase S1 domain maps to 25 to 251 (VIGGDECNIN…HLDWIQSIIA (227 aa)). 5 disulfide bridges follow: C31–C165, C100–C258, C144–C212, C176–C191, and C202–C227. The active-site Charge relay system is the H67. Residue N105 is glycosylated (N-linked (GlcNAc...) asparagine). Catalysis depends on D112, which acts as the Charge relay system. N-linked (GlcNAc...) asparagine glycans are attached at residues N124 and N172. The Charge relay system role is filled by S206. N-linked (GlcNAc...) asparagine glycosylation is found at N213 and N255.

Belongs to the peptidase S1 family. Snake venom subfamily. Monomer. In terms of tissue distribution, expressed by the venom gland.

The protein resides in the secreted. In terms of biological role, snake venom serine protease that may act in the hemostasis system of the prey. The chain is Snake venom serine protease KN5 from Trimeresurus stejnegeri (Chinese green tree viper).